Reading from the N-terminus, the 60-residue chain is Large ribosomal subunit protein uL30 (60 aa).

Belongs to the universal ribosomal protein uL30 family. Part of the 50S ribosomal subunit.

The polypeptide is Large ribosomal subunit protein uL30 (Lactiplantibacillus plantarum (strain ATCC BAA-793 / NCIMB 8826 / WCFS1) (Lactobacillus plantarum)).